The sequence spans 309 residues: Protein FdhE homolog (309 aa).

It belongs to the FdhE family.

It is found in the cytoplasm. Necessary for formate dehydrogenase activity. This chain is Protein FdhE homolog, found in Cronobacter sakazakii (strain ATCC BAA-894) (Enterobacter sakazakii).